The primary structure comprises 181 residues: Minor capsid protein P4 (181 aa).

In terms of assembly, interacts with the major capsid protein.

The protein resides in the virion. Functionally, one of the minor capsid proteins that constitute a network internal to the major capsid proteins and outside the lipid membrane. The minor capsid proteins glue and stabilize the capsomers. This Chlorella (PBCV-1) protein is Minor capsid protein P4.